The following is a 395-amino-acid chain: Probable L-tyrosine/L-aspartate decarboxylase (395 aa).

N6-(pyridoxal phosphate)lysine is present on Lys-242.

This sequence belongs to the group II decarboxylase family. MfnA subfamily. Requires pyridoxal 5'-phosphate as cofactor.

It carries out the reaction L-tyrosine + H(+) = tyramine + CO2. The catalysed reaction is L-aspartate + H(+) = beta-alanine + CO2. Its pathway is cofactor biosynthesis; methanofuran biosynthesis. It participates in cofactor biosynthesis; coenzyme A biosynthesis. Catalyzes the decarboxylation of L-tyrosine to produce tyramine for methanofuran biosynthesis. Can also catalyze the decarboxylation of L-aspartate to produce beta-alanine for coenzyme A (CoA) biosynthesis. The sequence is that of Probable L-tyrosine/L-aspartate decarboxylase from Methanosarcina barkeri (strain Fusaro / DSM 804).